The following is a 243-amino-acid chain: Probable 2-phosphosulfolactate phosphatase (243 aa).

The protein belongs to the ComB family. It depends on Mg(2+) as a cofactor.

It catalyses the reaction (2R)-O-phospho-3-sulfolactate + H2O = (2R)-3-sulfolactate + phosphate. The sequence is that of Probable 2-phosphosulfolactate phosphatase from Prochlorococcus marinus (strain MIT 9313).